We begin with the raw amino-acid sequence, 219 residues long: ATP phosphoribosyltransferase (219 aa).

The protein belongs to the ATP phosphoribosyltransferase family. Short subfamily. In terms of assembly, heteromultimer composed of HisG and HisZ subunits.

It localises to the cytoplasm. The catalysed reaction is 1-(5-phospho-beta-D-ribosyl)-ATP + diphosphate = 5-phospho-alpha-D-ribose 1-diphosphate + ATP. The protein operates within amino-acid biosynthesis; L-histidine biosynthesis; L-histidine from 5-phospho-alpha-D-ribose 1-diphosphate: step 1/9. Catalyzes the condensation of ATP and 5-phosphoribose 1-diphosphate to form N'-(5'-phosphoribosyl)-ATP (PR-ATP). Has a crucial role in the pathway because the rate of histidine biosynthesis seems to be controlled primarily by regulation of HisG enzymatic activity. The sequence is that of ATP phosphoribosyltransferase from Syntrophotalea carbinolica (strain DSM 2380 / NBRC 103641 / GraBd1) (Pelobacter carbinolicus).